The primary structure comprises 20 residues: Putative antimicrobial protein 2 (20 aa).

The tract at residues 1–20 (DLPECCSATELELDSGKQTS) is disordered.

In terms of biological role, may have antimicrobial activity. The sequence is that of Putative antimicrobial protein 2 from Cenchritis muricatus (Beaded periwinkle).